We begin with the raw amino-acid sequence, 398 residues long: MASNDKGLEEIPEGQIETNYDEVTDSFDSMDLKPELLRGVYAYGFERPSAIQQRAIKPIIAGHDVIAQAQSGTGKTATFSISALQKIDQELKACQALIVAPTRELAQQIQKVVVAIGDFMNIECHACIGGTNVRDDMNALRAGPQVVVGTPGRIHDMIERRVLKTDQMKLFILDEADEMLSRGFTEQIYDIFQLLPQSTQVTLLSATMPQDVLEVTTKFMRDPIRILVKKQELTLEGIKQFYIAVEKEEWKLDTLSDLYETVTITQAVIFCNTRRKVDWLTDKLTARDFTVSAMHGDMEQGQRDVIMKEFRSGSSRVLIATDLLARGIDVQQVSLVINYDLPANRENYIHRIGRGGRFGRKGVAINFVTADDVRMMREIEQFYSTQIEEMPMNVADLI.

A Q motif motif is present at residues 25-53 (DSFDSMDLKPELLRGVYAYGFERPSAIQQ). In terms of domain architecture, Helicase ATP-binding spans 56-226 (IKPIIAGHDV…TKFMRDPIRI (171 aa)). 69-76 (AQSGTGKT) is a binding site for ATP. The DEAD box motif lies at 174-177 (DEAD). The Helicase C-terminal domain occupies 237–398 (GIKQFYIAVE…EMPMNVADLI (162 aa)).

It belongs to the DEAD box helicase family. eIF4A subfamily. In terms of assembly, component of the eIF4F complex, which composition varies with external and internal environmental conditions. It is composed of at least eIF4A, eIF4E and eIF4G.

The protein localises to the cytoplasm. It carries out the reaction ATP + H2O = ADP + phosphate + H(+). In terms of biological role, ATP-dependent RNA helicase which is a subunit of the eIF4F complex involved in cap recognition and is required for mRNA binding to ribosome. In the current model of translation initiation, eIF4A unwinds RNA secondary structures in the 5'-UTR of mRNAs which is necessary to allow efficient binding of the small ribosomal subunit, and subsequent scanning for the initiator codon. This is ATP-dependent RNA helicase eIF4A (tif1) from Aspergillus niger (strain ATCC MYA-4892 / CBS 513.88 / FGSC A1513).